Here is a 1284-residue protein sequence, read N- to C-terminus: Neuronal cell adhesion molecule (1284 aa).

The N-terminal stretch at 1–24 is a signal peptide; sequence MMKEKSISASKASLVFFLCQMISA. Topologically, residues 25-1143 are extracellular; that stretch reads LDVPLDSKLL…ASRQVDIATQ (1119 aa). 6 Ig-like C2-type domains span residues 41 to 129, 136 to 230, 243 to 332, 337 to 424, 430 to 517, and 521 to 608; these read PTIT…AAIS, PSRS…QPIS, PPVL…ISVT, PYWI…AFVN, PRIL…VQLE, and PTMI…AVLT. 2 disulfide bridges follow: cysteine 63–cysteine 118 and cysteine 162–cysteine 213. N-linked (GlcNAc...) asparagine glycosylation occurs at asparagine 78. N-linked (GlcNAc...) asparagine glycosylation is found at asparagine 218 and asparagine 290. Disulfide bonds link cysteine 268–cysteine 316 and cysteine 358–cysteine 408. Residues asparagine 409, asparagine 483, asparagine 576, asparagine 581, asparagine 595, and asparagine 692 are each glycosylated (N-linked (GlcNAc...) asparagine). 2 cysteine pairs are disulfide-bonded: cysteine 452–cysteine 501 and cysteine 543–cysteine 592. 5 consecutive Fibronectin type-III domains span residues 625–720, 725–819, 824–926, 930–1026, and 1040–1132; these read PPLD…TKSA, NPSN…SGED, APGN…TPEG, PPSF…IMDE, and QPLY…TGPA. Over residues 707-731 the composition is skewed to polar residues; sequence QPSEPSEQYLTKSANPDENPSNVQG. The disordered stretch occupies residues 707-732; that stretch reads QPSEPSEQYLTKSANPDENPSNVQGI. N-linked (GlcNAc...) asparagine glycans are attached at residues asparagine 778, asparagine 834, asparagine 885, asparagine 969, asparagine 985, asparagine 995, asparagine 1048, asparagine 1059, and asparagine 1091. Residues 1144–1166 form a helical membrane-spanning segment; it reads GWFIGLMCAVALLILILLIVCFI. Residues 1167-1284 lie on the Cytoplasmic side of the membrane; it reads RRNKGGKYPV…SPVNAMNSFV (118 aa). Composition is skewed to basic and acidic residues over residues 1175 to 1195, 1202 to 1212, and 1221 to 1230; these read PVKE…KEDD, RSLESDAEDHK, and PSDRTVKKED. Residues 1175 to 1284 are disordered; the sequence is PVKEKEDAHA…SPVNAMNSFV (110 aa). Residues 1268–1284 are compositionally biased toward polar residues; it reads NESSEAPSPVNAMNSFV.

Belongs to the immunoglobulin superfamily. L1/neurofascin/NgCAM family. In terms of assembly, heterodimer of an alpha and a beta chain. Retina and developing brain.

The protein resides in the cell membrane. Functionally, this protein is a cell adhesion molecule involved in neuron-neuron adhesion, neurite fasciculation, outgrowth of neurites, etc. Specifically involved in the development of optic fibres in the retina. The protein is Neuronal cell adhesion molecule of Gallus gallus (Chicken).